Here is a 553-residue protein sequence, read N- to C-terminus: Glutamine--tRNA ligase (553 aa).

Positions 34–44 (PEPNGYLHIGH) match the 'HIGH' region motif. Residues 35 to 37 (EPN) and 41 to 47 (HIGHAKS) each bind ATP. Asp67 and Tyr212 together coordinate L-glutamine. Residues Thr231, 261-262 (RL), and 269-271 (MSK) contribute to the ATP site. A 'KMSKS' region motif is present at residues 268-272 (IMSKR).

This sequence belongs to the class-I aminoacyl-tRNA synthetase family. Monomer.

The protein localises to the cytoplasm. It catalyses the reaction tRNA(Gln) + L-glutamine + ATP = L-glutaminyl-tRNA(Gln) + AMP + diphosphate. The sequence is that of Glutamine--tRNA ligase from Tolumonas auensis (strain DSM 9187 / NBRC 110442 / TA 4).